Reading from the N-terminus, the 938-residue chain is Leucine--tRNA ligase 1 (938 aa).

Positions 40–50 (PYTNSPLHIGH) match the 'HIGH' region motif. The short motif at 620–624 (KMSKS) is the 'KMSKS' region element. Position 623 (lysine 623) interacts with ATP.

The protein belongs to the class-I aminoacyl-tRNA synthetase family.

It is found in the cytoplasm. The catalysed reaction is tRNA(Leu) + L-leucine + ATP = L-leucyl-tRNA(Leu) + AMP + diphosphate. In Metallosphaera sedula (strain ATCC 51363 / DSM 5348 / JCM 9185 / NBRC 15509 / TH2), this protein is Leucine--tRNA ligase 1.